The chain runs to 188 residues: Putative manganese efflux pump MntP (188 aa).

6 consecutive transmembrane segments (helical) span residues 3–23, 41–61, 66–86, 107–129, 143–163, and 168–188; these read ITAT…ASIG, LIFG…GMLA, LEWN…RMII, LLVT…LAFL, ATLI…PLLG, and ILGG…HFHG.

Belongs to the MntP (TC 9.B.29) family.

It is found in the cell inner membrane. Probably functions as a manganese efflux pump. In Citrobacter koseri (strain ATCC BAA-895 / CDC 4225-83 / SGSC4696), this protein is Putative manganese efflux pump MntP.